The primary structure comprises 225 residues: MVKVKFLGHAAFYIEGSKKILIDPFLTGNPQAVAKPEDFKDVDLILVTHAHGDHIGDAGEIAKISGAKIVAMYDIANYIAEKFKGVETVGMNYGPTEVDGVFIVQVPAWHSSSDGKYSIGNASGFIVKLDGKTIYHAGDTYVFKDMELFSELYGPIDVALLPIGGHFTMGVKEAAKAVELLKPRTVVPMHYNTWPPISADPEEFKKLVGDKAKVVVLKPGEELEL.

Belongs to the UPF0173 family.

The chain is UPF0173 metal-dependent hydrolase PYRAB05000 from Pyrococcus abyssi (strain GE5 / Orsay).